Reading from the N-terminus, the 33-residue chain is MSDINATRLPIWGIGCNPCVGDDVTSVLTRGEA.

The propeptide occupies 1–10 (MSDINATRLP). Ile11 carries the (3R,4R)-4,5-dihydroxyisoleucine; in form alpha-amanitin modification. A (3R,4S)-4-hydroxyisoleucine; in form gamma-amanitin modification is found at Ile11. The cyclopeptide (Ile-Pro) cross-link spans 11-18 (IWGIGCNP). Residues 12–16 (WGIGC) constitute a cross-link (2'-cysteinyl-6'-hydroxytryptophan sulfoxide (Trp-Cys)). Pro18 is subject to 4-hydroxyproline. The propeptide occupies 19–33 (CVGDDVTSVLTRGEA).

This sequence belongs to the MSDIN fungal toxin family. In terms of processing, processed by the macrocyclase-peptidase enzyme POPB to yield a toxic cyclic octapeptide. POPB first removes 10 residues from the N-terminus. Conformational trapping of the remaining peptide forces the enzyme to release this intermediate rather than proceed to macrocyclization. The enzyme rebinds the remaining peptide in a different conformation and catalyzes macrocyclization of the N-terminal 8 residues. Expressed in basidiocarps.

In terms of biological role, major toxin belonging to the bicyclic octapeptides amatoxins that acts by binding non-competitively to RNA polymerase II and greatly slowing the elongation of transcripts from target promoters. The sequence is that of Alpha-amanitin proprotein 2 from Amanita exitialis (Guangzhou destroying angel).